A 421-amino-acid polypeptide reads, in one-letter code: ATP-dependent RNA helicase RhlB (421 aa).

A Q motif motif is present at residues Gln9–Ala37. Residues Leu40 to Val219 form the Helicase ATP-binding domain. Ala53–Thr60 lines the ATP pocket. The short motif at Asp165–Asp168 is the DEAD box element. A Helicase C-terminal domain is found at Arg245–Met390. The segment at Leu393–Gly421 is disordered. Residues Arg403–Pro414 show a composition bias toward low complexity.

Belongs to the DEAD box helicase family. RhlB subfamily. Component of the RNA degradosome, which is a multiprotein complex involved in RNA processing and mRNA degradation.

The protein localises to the cytoplasm. The enzyme catalyses ATP + H2O = ADP + phosphate + H(+). Its function is as follows. DEAD-box RNA helicase involved in RNA degradation. Has RNA-dependent ATPase activity and unwinds double-stranded RNA. The chain is ATP-dependent RNA helicase RhlB from Citrobacter koseri (strain ATCC BAA-895 / CDC 4225-83 / SGSC4696).